The chain runs to 252 residues: 5'-nucleotidase SurE (252 aa).

The a divalent metal cation site is built by Asp-8, Asp-9, Ser-40, and Asn-93.

The protein belongs to the SurE nucleotidase family. A divalent metal cation is required as a cofactor.

The protein resides in the cytoplasm. The catalysed reaction is a ribonucleoside 5'-phosphate + H2O = a ribonucleoside + phosphate. Functionally, nucleotidase that shows phosphatase activity on nucleoside 5'-monophosphates. This Methylocella silvestris (strain DSM 15510 / CIP 108128 / LMG 27833 / NCIMB 13906 / BL2) protein is 5'-nucleotidase SurE.